A 445-amino-acid polypeptide reads, in one-letter code: Histone acetyltransferase of the MYST family 2 (445 aa).

Positions M1 to P23 are enriched in polar residues. Residues M1–L58 form a disordered region. The Tudor-knot domain maps to L60–L118. One can recognise an MYST-type HAT domain in the interval T169–P440. The segment at L202–L227 adopts a C2HC MYST-type zinc-finger fold. The residue at position 269 (K269) is an N6-acetyllysine; by autocatalysis. Residues I312–T314 and Q319–K325 each bind acetyl-CoA. E345 acts as the Proton donor/acceptor in catalysis. Acetyl-CoA is bound at residue S349.

Belongs to the MYST (SAS/MOZ) family. Interacts with MRG1 and MRG2. In terms of processing, autoacetylation at Lys-269 is required for proper function. Expressed in cotyledons, leaves, stems, roots and, at higher levels in developing flowers, particularly in the anthers and gynoecia. Constitutively expressed in all tissues, predominantly in shoot apical meristem.

It is found in the nucleus. The enzyme catalyses L-lysyl-[protein] + acetyl-CoA = N(6)-acetyl-L-lysyl-[protein] + CoA + H(+). Its function is as follows. Histone acetyltransferase which may be involved in transcriptional activation. Acetylates 'Lys-5' of histone H4 (H4K5ac). Essential for gametophyte development. Negative regulator of flowering controlling the H4K5ac levels in the FLC chromatin. This chain is Histone acetyltransferase of the MYST family 2, found in Arabidopsis thaliana (Mouse-ear cress).